A 153-amino-acid polypeptide reads, in one-letter code: Flagellar assembly factor FliW (153 aa).

It belongs to the FliW family. In terms of assembly, interacts with translational regulator CsrA and flagellin(s).

The protein localises to the cytoplasm. Its function is as follows. Acts as an anti-CsrA protein, binds CsrA and prevents it from repressing translation of its target genes, one of which is flagellin. Binds to flagellin and participates in the assembly of the flagellum. In Heliobacterium modesticaldum (strain ATCC 51547 / Ice1), this protein is Flagellar assembly factor FliW.